We begin with the raw amino-acid sequence, 103 residues long: Integration host factor subunit alpha (103 aa).

It belongs to the bacterial histone-like protein family. As to quaternary structure, heterodimer of an alpha and a beta chain.

Its function is as follows. This protein is one of the two subunits of integration host factor, a specific DNA-binding protein that functions in genetic recombination as well as in transcriptional and translational control. The polypeptide is Integration host factor subunit alpha (Aromatoleum aromaticum (strain DSM 19018 / LMG 30748 / EbN1) (Azoarcus sp. (strain EbN1))).